We begin with the raw amino-acid sequence, 143 residues long: NADH-quinone oxidoreductase subunit A (143 aa).

The next 3 helical transmembrane spans lie at 8–28 (FGNV…GYLT), 63–83 (FYVV…LFPW), and 93–113 (FALV…VYAW).

Belongs to the complex I subunit 3 family. In terms of assembly, NDH-1 is composed of 14 different subunits. Subunits NuoA, H, J, K, L, M, N constitute the membrane sector of the complex.

The protein localises to the cell inner membrane. The catalysed reaction is a quinone + NADH + 5 H(+)(in) = a quinol + NAD(+) + 4 H(+)(out). In terms of biological role, NDH-1 shuttles electrons from NADH, via FMN and iron-sulfur (Fe-S) centers, to quinones in the respiratory chain. The immediate electron acceptor for the enzyme in this species is believed to be a menaquinone. Couples the redox reaction to proton translocation (for every two electrons transferred, four hydrogen ions are translocated across the cytoplasmic membrane), and thus conserves the redox energy in a proton gradient. The chain is NADH-quinone oxidoreductase subunit A from Chlorobium phaeovibrioides (strain DSM 265 / 1930) (Prosthecochloris vibrioformis (strain DSM 265)).